We begin with the raw amino-acid sequence, 532 residues long: Flavin-containing monooxygenase 1 (532 aa).

Position 2 is an N-acetylalanine (Ala2). Residues 2-510 are Lumenal-facing; sequence AKRVAIVGAG…ARVVQESPSP (509 aa). FAD-binding positions include 9–13, Glu32, 40–41, and 61–62; these read GAGVS, LW, and NS. Residues 60–61 and 195–198 contribute to the NADP(+) site; these read SN and SGTD. A helical membrane pass occupies residues 511–531; it reads FESFLKVFSFLALLVAIFLIF. A topological domain (cytoplasmic) is located at residue Leu532.

This sequence belongs to the FMO family. FAD serves as cofactor. As to expression, expressed mainly in fetal and adult liver.

Its subcellular location is the endoplasmic reticulum membrane. It catalyses the reaction hypotaurine + NADPH + O2 + H(+) = taurine + NADP(+) + H2O. It carries out the reaction hypotaurine + NADH + O2 + H(+) = taurine + NAD(+) + H2O. The catalysed reaction is trimethylamine + NADPH + O2 = trimethylamine N-oxide + NADP(+) + H2O. The enzyme catalyses N,N-dimethylaniline + NADPH + O2 + H(+) = N,N-dimethylaniline N-oxide + NADP(+) + H2O. Its function is as follows. Broad spectrum monooxygenase that catalyzes the oxygenation of a wide variety of nitrogen- and sulfur-containing compounds including xenobiotics. Catalyzes the S-oxygenation of hypotaurine to produce taurine, an organic osmolyte involved in cell volume regulation as well as a variety of cytoprotective and developmental processes. In vitro, catalyzes the N-oxygenation of trimethylamine (TMA) to produce trimethylamine N-oxide (TMAO) and could therefore participate to the detoxification of this compound that is generated by the action of gut microbiota from dietary precursors such as choline, choline containing compounds, betaine or L-carnitine. This Homo sapiens (Human) protein is Flavin-containing monooxygenase 1.